The primary structure comprises 416 residues: CinA-like protein (416 aa).

Belongs to the CinA family.

This is CinA-like protein from Amoebophilus asiaticus (strain 5a2).